The following is a 401-amino-acid chain: Enoyl-[acyl-carrier-protein] reductase [NADH] (401 aa).

Residues G48–Y53, F74–E75, D111–A112, and L139–A140 each bind NAD(+). Substrate is bound at residue Y225. Y235 acts as the Proton donor in catalysis. Residues K244 and V273–T275 each bind NAD(+).

It belongs to the TER reductase family. As to quaternary structure, monomer.

The enzyme catalyses a 2,3-saturated acyl-[ACP] + NAD(+) = a (2E)-enoyl-[ACP] + NADH + H(+). It participates in lipid metabolism; fatty acid biosynthesis. Involved in the final reduction of the elongation cycle of fatty acid synthesis (FAS II). Catalyzes the reduction of a carbon-carbon double bond in an enoyl moiety that is covalently linked to an acyl carrier protein (ACP). In Shewanella putrefaciens (strain CN-32 / ATCC BAA-453), this protein is Enoyl-[acyl-carrier-protein] reductase [NADH].